The sequence spans 114 residues: Protein S40-2 (114 aa).

A disordered region spans residues 23–50 (RYTKLYNSRNDEKKGTRRHETAEKTSPV). The span at 31–45 (RNDEKKGTRRHETAE) shows a compositional bias: basic and acidic residues.

It belongs to the senescence regulator S40 family.

It is found in the cytoplasm. The chain is Protein S40-2 from Arabidopsis thaliana (Mouse-ear cress).